Here is a 259-residue protein sequence, read N- to C-terminus: UPF0246 protein NGO_0461 (259 aa).

Belongs to the UPF0246 family.

The protein is UPF0246 protein NGO_0461 of Neisseria gonorrhoeae (strain ATCC 700825 / FA 1090).